The sequence spans 608 residues: Preterminal protein (608 aa).

The Nuclear localization signal signature appears at Arg338–Arg347. The interval Arg342 to Glu377 is disordered. O-(5'-phospho-DNA)-serine is present on Ser536.

Belongs to the adenoviridae terminal protein family. In terms of assembly, heterodimer with the polymerase; this heterodimer binds to bp 9 to 18 of the genome. Interacts with host POU2F1; POU2F1 binds to the auxiliary sequences in the inverted terminal repeats and tethers the pTP-POL heterodimer to the origin DNA thereby participating in the assembly of the pre-initiation complex (POL-TP-DBP-NFIA-POU2F1). In terms of processing, preterminal protein is used to replicate viral genome, upon genomic encapsidation it is processed first into iTP and finally into TP by adenovirus protease.

It localises to the host nucleus matrix. Functionally, protein covalently bound to the viral DNA that acts as a primer for viral genomic replication by DNA strand displacement. Assembles on the viral origin of replication in an initiation complex with viral polymerase, DBP, host NFIA and host POU2F1/OCT1. During initiation, the polymerase covalently couples the first dCTP with Ser-580 of pTP. The terminal protein stimulates the template activity over 20 fold compared to protein-free templates. Neo-synthesized viral genomes are linked to two preterminal proteins, one for each 5' end. These new genomes are encapsidated in the nucleus, and during capsid maturation by viral protease, preterminal protein is first cleaved into intermediary (iTP), then into mature TP. May play a role in host nuclear matrix localization of genomic DNA. The chain is Preterminal protein from Canine adenovirus serotype 1 (strain CLL) (CAdV-1).